The sequence spans 752 residues: Ribosomal protein S6 kinase 2 alpha (752 aa).

A Protein kinase 1 domain is found at 80-339 (FELLKVLGQG…AEEIKRHPFY (260 aa)). ATP is bound by residues 86–94 (LGQGSFGKV) and K112. Residue D205 is the Proton acceptor of the active site. S239 carries the post-translational modification Phosphoserine. Residues 340 to 409 (STIDWNKLYR…VATGLMEDSK (70 aa)) enclose the AGC-kinase C-terminal domain. A Phosphothreonine modification is found at T377. S381 carries the phosphoserine modification. S398 is modified (phosphoserine; by autocatalysis). In terms of domain architecture, Protein kinase 2 spans 435–692 (YVVKEAIGVG…AKQVLQHPWI (258 aa)). ATP contacts are provided by residues 441–449 (IGVGSYSVC) and K464. D552 serves as the catalytic Proton acceptor. The residue at position 590 (T590) is a Phosphothreonine. S749 is subject to Phosphoserine.

This sequence belongs to the protein kinase superfamily. AGC Ser/Thr protein kinase family. S6 kinase subfamily. Mg(2+) serves as cofactor. Autophosphorylated on Ser-398, as part of the activation process. In terms of tissue distribution, small and large intestine, spleen, stomach, and bursa, and to a lesser extent lung and kidney.

The catalysed reaction is L-seryl-[protein] + ATP = O-phospho-L-seryl-[protein] + ADP + H(+). It carries out the reaction L-threonyl-[protein] + ATP = O-phospho-L-threonyl-[protein] + ADP + H(+). Activated by multiple phosphorylations on threonine and serine residues. Serine/threonine kinase that may play a role in mediating the growth-factor and stress induced activation of transcription. The polypeptide is Ribosomal protein S6 kinase 2 alpha (RPS6KA) (Gallus gallus (Chicken)).